The chain runs to 581 residues: Pyridine nucleotide-disulfide oxidoreductase domain-containing protein 2 (581 aa).

38-71 is an FAD binding site; it reads VVIGAGHNGLVAAAYLQRLGVNTAVFERRHVIGG.

This sequence belongs to the carotenoid/retinoid oxidoreductase family. As to quaternary structure, interacts with COX5B; this interaction may contribute to localize PYROXD2 to the inner face of the inner mitochondrial membrane.

It localises to the mitochondrion matrix. Its function is as follows. Probable oxidoreductase that may play a role as regulator of mitochondrial function. This chain is Pyridine nucleotide-disulfide oxidoreductase domain-containing protein 2, found in Homo sapiens (Human).